A 456-amino-acid polypeptide reads, in one-letter code: Enolase (456 aa).

Glutamine 169 serves as a coordination point for (2R)-2-phosphoglycerate. The active-site Proton donor is glutamate 211. Residues aspartate 252, glutamate 314, and aspartate 341 each contribute to the Mg(2+) site. The (2R)-2-phosphoglycerate site is built by lysine 366, arginine 395, serine 396, and lysine 417. Catalysis depends on lysine 366, which acts as the Proton acceptor.

Belongs to the enolase family. It depends on Mg(2+) as a cofactor.

Its subcellular location is the cytoplasm. The protein resides in the secreted. The protein localises to the cell surface. The enzyme catalyses (2R)-2-phosphoglycerate = phosphoenolpyruvate + H2O. It functions in the pathway carbohydrate degradation; glycolysis; pyruvate from D-glyceraldehyde 3-phosphate: step 4/5. Its function is as follows. Catalyzes the reversible conversion of 2-phosphoglycerate (2-PG) into phosphoenolpyruvate (PEP). It is essential for the degradation of carbohydrates via glycolysis. The chain is Enolase from Metamycoplasma arthritidis (strain 158L3-1) (Mycoplasma arthritidis).